The primary structure comprises 255 residues: 3-oxoacyl-[acyl-carrier-protein] reductase MabA (255 aa).

NADP(+) contacts are provided by residues 33-35 (RGI), arginine 55, 69-70 (DV), glycine 98, tyrosine 161, lysine 165, isoleucine 194, and arginine 205. Catalysis depends on tyrosine 161, which acts as the Proton acceptor.

It belongs to the short-chain dehydrogenases/reductases (SDR) family. In terms of assembly, homotetramer.

Its subcellular location is the secreted. The protein resides in the cell wall. The catalysed reaction is a (3R)-hydroxyacyl-[ACP] + NADP(+) = a 3-oxoacyl-[ACP] + NADPH + H(+). Its pathway is lipid metabolism; mycolic acid biosynthesis. Part of the mycobacterial fatty acid elongation system FAS-II, which is involved in mycolic acid biosynthesis. Catalyzes the NADPH-dependent reduction of beta-ketoacyl derivatives, the second step of the FAS-II elongation cycle. The chain is 3-oxoacyl-[acyl-carrier-protein] reductase MabA from Mycobacterium avium.